Here is a 101-residue protein sequence, read N- to C-terminus: Small ribosomal subunit protein uS14A (101 aa).

This sequence belongs to the universal ribosomal protein uS14 family. As to quaternary structure, part of the 30S ribosomal subunit. Contacts proteins S3 and S10.

Functionally, binds 16S rRNA, required for the assembly of 30S particles and may also be responsible for determining the conformation of the 16S rRNA at the A site. In Salinispora arenicola (strain CNS-205), this protein is Small ribosomal subunit protein uS14A.